The chain runs to 154 residues: Ribonuclease H (154 aa).

Residues 1–142 enclose the RNase H type-1 domain; that stretch reads MLKQITLYTD…CDELARNAAL (142 aa). Positions 10, 48, 70, and 134 each coordinate Mg(2+).

The protein belongs to the RNase H family. Monomer. Mg(2+) is required as a cofactor.

The protein resides in the cytoplasm. The enzyme catalyses Endonucleolytic cleavage to 5'-phosphomonoester.. Functionally, endonuclease that specifically degrades the RNA of RNA-DNA hybrids. This Tolumonas auensis (strain DSM 9187 / NBRC 110442 / TA 4) protein is Ribonuclease H.